Consider the following 196-residue polypeptide: Large ribosomal subunit protein uL18 (196 aa).

Belongs to the universal ribosomal protein uL18 family. In terms of assembly, part of the 50S ribosomal subunit. Contacts the 5S and 23S rRNAs.

Functionally, this is one of the proteins that bind and probably mediate the attachment of the 5S RNA into the large ribosomal subunit, where it forms part of the central protuberance. In Saccharolobus islandicus (strain Y.N.15.51 / Yellowstone #2) (Sulfolobus islandicus), this protein is Large ribosomal subunit protein uL18.